The chain runs to 319 residues: 1-aminocyclopropane-1-carboxylate oxidase (319 aa).

Residues 152–253 (GPNFGSKVSN…RMSLASFYNP (102 aa)) enclose the Fe2OG dioxygenase domain. Fe cation-binding residues include His177, Asp179, and His234.

It belongs to the iron/ascorbate-dependent oxidoreductase family. Requires Fe cation as cofactor.

The catalysed reaction is 1-aminocyclopropane-1-carboxylate + L-ascorbate + O2 = ethene + L-dehydroascorbate + hydrogen cyanide + CO2 + 2 H2O. The protein operates within alkene biosynthesis; ethylene biosynthesis via S-adenosyl-L-methionine; ethylene from S-adenosyl-L-methionine: step 2/2. The chain is 1-aminocyclopropane-1-carboxylate oxidase (ACO) from Nicotiana tabacum (Common tobacco).